The following is a 614-amino-acid chain: 1-deoxy-D-xylulose-5-phosphate synthase (614 aa).

Residues His74 and 115-117 (AHS) contribute to the thiamine diphosphate site. A Mg(2+)-binding site is contributed by Asp146. Residues 147–148 (GA), Asn175, Tyr282, and Glu363 contribute to the thiamine diphosphate site. Residue Asn175 coordinates Mg(2+).

The protein belongs to the transketolase family. DXPS subfamily. As to quaternary structure, homodimer. It depends on Mg(2+) as a cofactor. Thiamine diphosphate is required as a cofactor.

The enzyme catalyses D-glyceraldehyde 3-phosphate + pyruvate + H(+) = 1-deoxy-D-xylulose 5-phosphate + CO2. Its pathway is metabolic intermediate biosynthesis; 1-deoxy-D-xylulose 5-phosphate biosynthesis; 1-deoxy-D-xylulose 5-phosphate from D-glyceraldehyde 3-phosphate and pyruvate: step 1/1. Functionally, catalyzes the acyloin condensation reaction between C atoms 2 and 3 of pyruvate and glyceraldehyde 3-phosphate to yield 1-deoxy-D-xylulose-5-phosphate (DXP). The chain is 1-deoxy-D-xylulose-5-phosphate synthase from Nitrosomonas eutropha (strain DSM 101675 / C91 / Nm57).